We begin with the raw amino-acid sequence, 123 residues long: Small ribosomal subunit protein uS12 (123 aa).

Aspartate 89 carries the 3-methylthioaspartic acid modification. Residues 104–123 (TQGVKDRRQRRSKYGAKRPK) are disordered. Residues 110–123 (RRQRRSKYGAKRPK) are compositionally biased toward basic residues.

Belongs to the universal ribosomal protein uS12 family. In terms of assembly, part of the 30S ribosomal subunit. Contacts proteins S8 and S17. May interact with IF1 in the 30S initiation complex.

In terms of biological role, with S4 and S5 plays an important role in translational accuracy. Functionally, interacts with and stabilizes bases of the 16S rRNA that are involved in tRNA selection in the A site and with the mRNA backbone. Located at the interface of the 30S and 50S subunits, it traverses the body of the 30S subunit contacting proteins on the other side and probably holding the rRNA structure together. The combined cluster of proteins S8, S12 and S17 appears to hold together the shoulder and platform of the 30S subunit. The protein is Small ribosomal subunit protein uS12 of Parvibaculum lavamentivorans (strain DS-1 / DSM 13023 / NCIMB 13966).